A 379-amino-acid polypeptide reads, in one-letter code: UDP-4-amino-4-deoxy-L-arabinose--oxoglutarate aminotransferase (379 aa).

K182 bears the N6-(pyridoxal phosphate)lysine mark.

The protein belongs to the DegT/DnrJ/EryC1 family. ArnB subfamily. Homodimer. Requires pyridoxal 5'-phosphate as cofactor.

It carries out the reaction UDP-4-amino-4-deoxy-beta-L-arabinose + 2-oxoglutarate = UDP-beta-L-threo-pentopyranos-4-ulose + L-glutamate. It functions in the pathway nucleotide-sugar biosynthesis; UDP-4-deoxy-4-formamido-beta-L-arabinose biosynthesis; UDP-4-deoxy-4-formamido-beta-L-arabinose from UDP-alpha-D-glucuronate: step 2/3. It participates in bacterial outer membrane biogenesis; lipopolysaccharide biosynthesis. Catalyzes the conversion of UDP-4-keto-arabinose (UDP-Ara4O) to UDP-4-amino-4-deoxy-L-arabinose (UDP-L-Ara4N). The modified arabinose is attached to lipid A and is required for resistance to polymyxin and cationic antimicrobial peptides. This chain is UDP-4-amino-4-deoxy-L-arabinose--oxoglutarate aminotransferase, found in Erwinia tasmaniensis (strain DSM 17950 / CFBP 7177 / CIP 109463 / NCPPB 4357 / Et1/99).